We begin with the raw amino-acid sequence, 705 residues long: Bifunctional arginine dihydrolase/ornithine cyclodeaminase ArgZ (705 aa).

The tract at residues 10–269 is arginine dihydrolase; the sequence is CPPDHYDVDY…GAAKCLTLRV (260 aa). L-arginine-binding residues include Asn-22, Asn-71, Arg-90, Arg-139, His-168, Asp-170, Ala-258, and Cys-264. L-ornithine-binding residues include Asn-22, Asn-71, Arg-90, Arg-139, and His-168. His-168 serves as the catalytic Proton donor/acceptor. L-ornithine contacts are provided by Ala-258 and Cys-264. Cys-264 functions as the Nucleophile in the catalytic mechanism. The interval 285–695 is ornithine cyclodeaminase; sequence SRVIRMEGHL…SLLVRQLQQL (411 aa). 10 residues coordinate NAD(+): Asn-525, Ala-526, Asp-604, Ser-636, Met-637, Leu-638, His-639, Asp-657, Asp-680, and Val-681.

It in the N-terminal section; belongs to the DDAH family. This sequence in the C-terminal section; belongs to the AgrE/ArgZ ornithine cyclodeaminase family. In terms of assembly, homotetramer. NAD(+) serves as cofactor.

It carries out the reaction L-arginine + 2 H2O + 2 H(+) = L-ornithine + 2 NH4(+) + CO2. The catalysed reaction is L-ornithine = L-proline + NH4(+). With respect to regulation, arginine dihydrolase activity does not require a metal cofactor. Its function is as follows. Bifunctional enzyme involved in a cyanobacterial arginine utilization pathway that enables cellular adaptation to nitrogen fluctuations. Catalyzes the hydrolysis of arginine to ornithine, with the release of ammonia and carbon dioxide. Then, probably catalyzes the conversion of ornithine to proline, with the release of ammonia. Is highly specific for arginine and cannot hydrolyze citrulline, dimethylarginine and other amino acids. This chain is Bifunctional arginine dihydrolase/ornithine cyclodeaminase ArgZ, found in Synechocystis sp. (strain ATCC 27184 / PCC 6803 / Kazusa).